We begin with the raw amino-acid sequence, 120 residues long: Crustacean hyperglycemic hormones 4 (120 aa).

The signal sequence occupies residues 1–26 (MVALNTLSAVSAALLVLAASPSPASA). 3 cysteine pairs are disulfide-bonded: Cys-53–Cys-89, Cys-69–Cys-85, and Cys-72–Cys-98. Val-118 carries the post-translational modification Valine amide.

It belongs to the arthropod CHH/MIH/GIH/VIH hormone family.

It is found in the secreted. Functionally, hormone found in the sinus gland of isopods and decapods which controls the blood sugar level. Has a secretagogue action over the amylase released from the midgut gland. May act as a stress hormone and may be involved in the control of molting and reproduction. The polypeptide is Crustacean hyperglycemic hormones 4 (CHH4) (Penaeus monodon (Giant tiger prawn)).